The sequence spans 78 residues: Acyl carrier protein (78 aa).

The region spanning 4 to 78 is the Carrier domain; it reads AEIKDKVYDI…QQAIDYIVKK (75 aa). An O-(pantetheine 4'-phosphoryl)serine modification is found at S39.

This sequence belongs to the acyl carrier protein (ACP) family. 4'-phosphopantetheine is transferred from CoA to a specific serine of apo-ACP by AcpS. This modification is essential for activity because fatty acids are bound in thioester linkage to the sulfhydryl of the prosthetic group.

The protein resides in the cytoplasm. It functions in the pathway lipid metabolism; fatty acid biosynthesis. Functionally, carrier of the growing fatty acid chain in fatty acid biosynthesis. This is Acyl carrier protein from Chlorobium phaeovibrioides (strain DSM 265 / 1930) (Prosthecochloris vibrioformis (strain DSM 265)).